The following is a 412-amino-acid chain: Hyaluronidase-3 (412 aa).

The signal sequence occupies residues 1 to 22; sequence MIMHLGLMMVVGLTLCLMHGQA. 5 disulfides stabilise this stretch: Cys-42–Cys-332, Cys-206–Cys-221, Cys-357–Cys-368, Cys-362–Cys-396, and Cys-398–Cys-407. An N-linked (GlcNAc...) asparagine glycan is attached at Asn-69. Glu-129 functions as the Proton donor in the catalytic mechanism. Asn-216 is a glycosylation site (N-linked (GlcNAc...) asparagine). Positions 353 to 408 constitute an EGF-like domain; sequence AAMACSHQRCHGHGRCARKDPGQMEAFLHLQPDDSLGAWNSFRCHCYSGWAGPTCL.

This sequence belongs to the glycosyl hydrolase 56 family. In terms of processing, N-glycosylated. In terms of tissue distribution, expressed in testis, epididymal tissue, epididymal luminal fluid (ELF), acrosome-intact (AI) sperm and caput (CAP), corpus (COR) and caudal (CAU) sperm. Higher expression in sperm than testis (at protein level). Liver, kidney, skin, brain, stomach and testis. Expressed mainly in granulosa cells of the ovaries. Expressed in small and large antral follicles. Not present in theca or stroma cells. Expressed in testis and liver. Expressed in testis and CAP, COR, and CAU epididymis tissue.

The protein localises to the secreted. It localises to the cell membrane. The protein resides in the cytoplasmic vesicle. It is found in the secretory vesicle. Its subcellular location is the acrosome. The protein localises to the endoplasmic reticulum. It localises to the early endosome. It catalyses the reaction Random hydrolysis of (1-&gt;4)-linkages between N-acetyl-beta-D-glucosamine and D-glucuronate residues in hyaluronate.. Functionally, facilitates sperm penetration into the layer of cumulus cells surrounding the egg by digesting hyaluronic acid. Involved in induction of the acrosome reaction in the sperm. Involved in follicular atresia, the breakdown of immature ovarian follicles that are not selected to ovulate. Induces ovarian granulosa cell apoptosis, possibly via apoptotic signaling pathway involving CASP8 and CASP3 activation, and poly(ADP-ribose) polymerase (PARP) cleavage. Has no hyaluronidase activity in embryonic fibroblasts in vitro. Has no hyaluronidase activity in granulosa cells in vitro. The protein is Hyaluronidase-3 (Hyal3) of Mus musculus (Mouse).